The primary structure comprises 772 residues: Transcription factor sdnS (772 aa).

Positions 23 to 53 (CWECRRRKIRCQFGAGNDTVCLPCQARGSTC) form a DNA-binding region, zn(2)-C6 fungal-type. Disordered stretches follow at residues 94-121 (EAGG…SAQN) and 156-180 (ASML…NSKT). Residues 100–121 (ANRSTTQSNRGSRSPSPDSAQN) show a composition bias toward polar residues.

The protein resides in the nucleus. Its pathway is antibiotic biosynthesis. Functionally, transcription factor; part of the gene cluster that mediates the biosynthesis of sordarin and hypoxysordarin, glycoside antibiotics with a unique tetracyclic diterpene aglycone structure. First, the geranylgeranyl diphosphate synthase sdnC constructs GGDP from farnesyl diphosphate and isopentenyl diphosphate. The diterpene cyclase sdnA then catalyzes the cyclization of GGDP to afford cycloaraneosene. Cycloaraneosene is then hydroxylated four times by the putative cytochrome P450 monooxygenases sdnB, sdnE, sdnF and sdnH to give a hydroxylated cycloaraneosene derivative such as cycloaraneosene-8,9,13,19-tetraol. Although the order of the hydroxylations is unclear, at least C8, C9 and C13 of the cycloaraneosene skeleton are hydroxylated before the sordaricin formation. Dehydration of the 13-hydroxy group of the hydroxylated cycloaraneosene derivative might be catalyzed by an unassigned hypothetical protein such as sdnG and sdnP to construct the cyclopentadiene moiety. The FAD-dependent oxidoreductase sdnN is proposed to catalyze the oxidation at C9 of the hydroxylated cycloaraneosene derivative and also catalyze the Baeyer-Villiger oxidation to give the lactone intermediate. The presumed lactone intermediate would be hydrolyzed to give an acrolein moiety and a carboxylate moiety. Then, [4+2]cycloaddition would occur between the acrolein moiety and the cyclopentadiene moiety to give sordaricin. SdnN might also be involved in the [4+2]cycloaddition after the hypothesized oxidation to accommodate the oxidized product and prompt the [4+2]cycloaddition. GDP-6-deoxy-D-altrose may be biosynthesized from GDP-D-mannose by the putative GDP-mannose-4,6-dehydratase sdnI and the short-chain dehydrogenase sdnK. The glycosyltransferase sdnJ catalyzes the attachment of 6-deoxy-D-altrose onto the 19-hydroxy group of sordaricin to give 4'-O-demethylsordarin. The methyltransferase sdnD would complete the biosynthesis of sordarin. Sordarin can be further modified into hypoxysordarin. The unique acyl chain at the 3'-hydroxy group of hypoxysordarin would be constructed by an iterative type I PKS sdnO and the trans-acting polyketide methyltransferase sdnL. SdnL would be responsible for the introduction of an alpha-methyl group of the polyketide chain. Alternatively, the beta-lactamase-like protein sdnR might be responsible for the cleavage and transfer of the polyketide chain from the PKS sdnO to sordarin. Two putative cytochrome P450 monooxygenases, sdnQ and sdnT, might catalyze the epoxidations of the polyketide chain to complete the biosynthesis of hypoxysordarin. Transcriptional regulators sdnM and sdnS are presumably encoded for the transcriptional regulation of the expression of the sdn gene cluster. In Sordaria araneosa (Pleurage araneosa), this protein is Transcription factor sdnS.